The following is a 529-amino-acid chain: Bifunctional purine biosynthesis protein PurH (529 aa).

The region spanning 1 to 148 (MQQRRPIRRA…KNHKDVAIVV (148 aa)) is the MGS-like domain.

This sequence belongs to the PurH family.

The catalysed reaction is (6R)-10-formyltetrahydrofolate + 5-amino-1-(5-phospho-beta-D-ribosyl)imidazole-4-carboxamide = 5-formamido-1-(5-phospho-D-ribosyl)imidazole-4-carboxamide + (6S)-5,6,7,8-tetrahydrofolate. The enzyme catalyses IMP + H2O = 5-formamido-1-(5-phospho-D-ribosyl)imidazole-4-carboxamide. It functions in the pathway purine metabolism; IMP biosynthesis via de novo pathway; 5-formamido-1-(5-phospho-D-ribosyl)imidazole-4-carboxamide from 5-amino-1-(5-phospho-D-ribosyl)imidazole-4-carboxamide (10-formyl THF route): step 1/1. The protein operates within purine metabolism; IMP biosynthesis via de novo pathway; IMP from 5-formamido-1-(5-phospho-D-ribosyl)imidazole-4-carboxamide: step 1/1. The chain is Bifunctional purine biosynthesis protein PurH from Yersinia pseudotuberculosis serotype IB (strain PB1/+).